A 379-amino-acid polypeptide reads, in one-letter code: Chaperone protein DnaJ (379 aa).

Residues 5–70 (DYYETLEVSQ…QKRAAYDQYG (66 aa)) form the J domain. The segment at 135–213 (GKSLEIKVPT…CRGQGRVEKT (79 aa)) adopts a CR-type zinc-finger fold. Zn(2+)-binding residues include Cys-148, Cys-151, Cys-165, Cys-168, Cys-187, Cys-190, Cys-201, and Cys-204. 4 CXXCXGXG motif repeats span residues 148 to 155 (CEPCDGSG), 165 to 172 (CSTCHGHG), 187 to 194 (CPTCSGKG), and 201 to 208 (CTSCRGQG).

This sequence belongs to the DnaJ family. As to quaternary structure, homodimer. The cofactor is Zn(2+).

It is found in the cytoplasm. Functionally, participates actively in the response to hyperosmotic and heat shock by preventing the aggregation of stress-denatured proteins and by disaggregating proteins, also in an autonomous, DnaK-independent fashion. Unfolded proteins bind initially to DnaJ; upon interaction with the DnaJ-bound protein, DnaK hydrolyzes its bound ATP, resulting in the formation of a stable complex. GrpE releases ADP from DnaK; ATP binding to DnaK triggers the release of the substrate protein, thus completing the reaction cycle. Several rounds of ATP-dependent interactions between DnaJ, DnaK and GrpE are required for fully efficient folding. Also involved, together with DnaK and GrpE, in the DNA replication of plasmids through activation of initiation proteins. This Colwellia maris protein is Chaperone protein DnaJ.